Consider the following 747-residue polypeptide: Polyribonucleotide nucleotidyltransferase (747 aa).

Residues D502 and D508 each coordinate Mg(2+). Positions 569-628 constitute a KH domain; it reads PRMLTITIDPDKIRDIIGPGGKIIKKIIEETGVEIDVEDDGRVFIASTDAAAGERALKII. Positions 638 to 712 constitute an S1 motif domain; the sequence is GKVYNGKVTR…PQGRLKLSRK (75 aa). The interval 718–747 is disordered; sequence STVGEGGHRHFRRAGREGGHRGLNNRRQSR.

It belongs to the polyribonucleotide nucleotidyltransferase family. It depends on Mg(2+) as a cofactor.

The protein localises to the cytoplasm. The enzyme catalyses RNA(n+1) + phosphate = RNA(n) + a ribonucleoside 5'-diphosphate. Its function is as follows. Involved in mRNA degradation. Catalyzes the phosphorolysis of single-stranded polyribonucleotides processively in the 3'- to 5'-direction. This chain is Polyribonucleotide nucleotidyltransferase, found in Moorella thermoacetica (strain ATCC 39073 / JCM 9320).